We begin with the raw amino-acid sequence, 121 residues long: uncharacterized protein (121 aa).

The next 3 membrane-spanning stretches (helical) occupy residues 12-32 (MIGIAALAVGIVLGLVFHPGV), 35-55 (VIQPYLPIAVVAALDAVFGGL), and 67-87 (VFVVSFVFNVLVAALIVYVGD).

The protein belongs to the sbp family.

It localises to the cell membrane. This is an uncharacterized protein from Mycobacterium bovis (strain ATCC BAA-935 / AF2122/97).